A 478-amino-acid polypeptide reads, in one-letter code: Nuclear distribution protein PAC1 (478 aa).

The LisH domain occupies 9–41; the sequence is QAEELHKAMIAYLLSANLPKSAAALREELADSV. Residues 60–87 adopt a coiled-coil conformation; it reads TSVVRLQKKIMDLESRNNALQSELDSAT. WD repeat units lie at residues 113-154, 156-196, 200-247, 250-289, 292-352, 354-393, 398-439, and 440-477; these read SHRE…RTIK, HTKA…KNIR, GHDH…CVKT, GHVDWVRDVVASPDGRFLFSAGNDQVARLWDVSSGETKST, GHEH…IKTL, GHDNWVRALAFHPGGKYLLSVSDDKTLRCWDLTQECKCVR, AHGH…GASA, and INGVVPTGKKEDPGGGPMMGIRCVIATGSVDLKVRVFA.

Belongs to the WD repeat LIS1/nudF family. In terms of assembly, self-associates. Interacts with NDL1 and dynein.

The protein localises to the cytoplasm. Its subcellular location is the cytoskeleton. It is found in the spindle pole. Positively regulates the activity of the minus-end directed microtubule motor protein dynein. May enhance dynein-mediated microtubule sliding by targeting dynein to the microtubule plus end. Required for nuclear migration during vegetative growth as well as development. Required for retrograde early endosome (EE) transport from the hyphal tip. Required for localization of dynein to the mitotic spindle poles. Recruits additional proteins to the dynein complex at SPBs. This Paracoccidioides brasiliensis (strain Pb03) protein is Nuclear distribution protein PAC1.